Consider the following 86-residue polypeptide: Small ribosomal subunit protein bS18 (86 aa).

The segment at 1–20 (MSREEGNNGRRPGGKMRRSR) is disordered.

The protein belongs to the bacterial ribosomal protein bS18 family. In terms of assembly, part of the 30S ribosomal subunit. Forms a tight heterodimer with protein bS6.

In terms of biological role, binds as a heterodimer with protein bS6 to the central domain of the 16S rRNA, where it helps stabilize the platform of the 30S subunit. In Clostridium beijerinckii (strain ATCC 51743 / NCIMB 8052) (Clostridium acetobutylicum), this protein is Small ribosomal subunit protein bS18.